We begin with the raw amino-acid sequence, 469 residues long: Light-independent protochlorophyllide reductase subunit N (469 aa).

[4Fe-4S] cluster contacts are provided by C24, C49, and C109.

Belongs to the BchN/ChlN family. As to quaternary structure, protochlorophyllide reductase is composed of three subunits; ChlL, ChlN and ChlB. Forms a heterotetramer of two ChlB and two ChlN subunits. It depends on [4Fe-4S] cluster as a cofactor.

It carries out the reaction chlorophyllide a + oxidized 2[4Fe-4S]-[ferredoxin] + 2 ADP + 2 phosphate = protochlorophyllide a + reduced 2[4Fe-4S]-[ferredoxin] + 2 ATP + 2 H2O. The protein operates within porphyrin-containing compound metabolism; chlorophyll biosynthesis (light-independent). Its function is as follows. Component of the dark-operative protochlorophyllide reductase (DPOR) that uses Mg-ATP and reduced ferredoxin to reduce ring D of protochlorophyllide (Pchlide) to form chlorophyllide a (Chlide). This reaction is light-independent. The NB-protein (ChlN-ChlB) is the catalytic component of the complex. In Gloeobacter violaceus (strain ATCC 29082 / PCC 7421), this protein is Light-independent protochlorophyllide reductase subunit N.